Here is a 319-residue protein sequence, read N- to C-terminus: Alpha/beta-gliadin A-V (319 aa).

Residues 1–20 (MKTFLILALLAIVATTATTA) form the signal peptide. A compositionally biased stretch (low complexity) spans 28-58 (LQPQNPSQQQPQEQVPLVQQQQFPGQQQQFP). Disordered regions lie at residues 28-125 (LQPQ…QQAQ) and 258-278 (SQVS…VQPQ). Composition is skewed to pro residues over residues 59-71 (PQQP…PFPS) and 81-104 (FPQP…PQQP). The span at 105 to 125 (YPQQQPQYLQPQQPISQQQAQ) shows a compositional bias: low complexity. Polar residues predominate over residues 267-278 (LNPQAQGSVQPQ).

Belongs to the gliadin/glutenin family. In terms of processing, substrate of transglutaminase.

Gliadin is the major seed storage protein in wheat. The protein is Alpha/beta-gliadin A-V of Triticum aestivum (Wheat).